The primary structure comprises 193 residues: Orotate phosphoribosyltransferase (193 aa).

5-phospho-alpha-D-ribose 1-diphosphate-binding positions include Arg102, Lys103, Lys106, His108, and 129-137; that span reads EDVVTTGGS. Orotate contacts are provided by Thr133 and Arg161.

It belongs to the purine/pyrimidine phosphoribosyltransferase family. PyrE subfamily. In terms of assembly, homodimer. The cofactor is Mg(2+).

It carries out the reaction orotidine 5'-phosphate + diphosphate = orotate + 5-phospho-alpha-D-ribose 1-diphosphate. The protein operates within pyrimidine metabolism; UMP biosynthesis via de novo pathway; UMP from orotate: step 1/2. Its function is as follows. Catalyzes the transfer of a ribosyl phosphate group from 5-phosphoribose 1-diphosphate to orotate, leading to the formation of orotidine monophosphate (OMP). This is Orotate phosphoribosyltransferase from Prochlorococcus marinus (strain NATL1A).